Reading from the N-terminus, the 640-residue chain is Large subunit GTPase 1 homolog (640 aa).

Residues Trp-165–Pro-426 form the CP-type G domain. A GTP-binding site is contributed by Asn-213–Asp-216. Residues Ala-251–Asn-341 form a disordered region. 3 stretches are compositionally biased toward acidic residues: residues Glu-253 to Glu-270, Glu-290 to Asp-304, and Glu-320 to Pro-331. Over residues Glu-332 to Asn-341 the composition is skewed to polar residues. GTP-binding positions include Gly-375 to Ser-382 and Asp-419 to Gly-422. Residues Gly-602–Ala-640 are disordered. Residues Pro-618–Ala-640 show a composition bias toward basic residues.

Belongs to the TRAFAC class YlqF/YawG GTPase family. LSG1 subfamily.

Its subcellular location is the cytoplasm. The protein resides in the endoplasmic reticulum. It is found in the nucleus. It localises to the cajal body. The catalysed reaction is GTP + H2O = GDP + phosphate + H(+). Its function is as follows. Functions as a GTPase. May act by mediating the release of NMD3 from the 60S ribosomal subunit after export into the cytoplasm during the 60S ribosomal subunit maturation. The sequence is that of Large subunit GTPase 1 homolog from Danio rerio (Zebrafish).